Reading from the N-terminus, the 41-residue chain is Large ribosomal subunit protein bL36 (41 aa).

Belongs to the bacterial ribosomal protein bL36 family.

In Rhodopseudomonas palustris (strain BisB18), this protein is Large ribosomal subunit protein bL36.